Here is a 325-residue protein sequence, read N- to C-terminus: Cytochrome f (325 aa).

The N-terminal stretch at 1–40 (MSKINLSTMWSSFIKKIAKTILVAIACISLFLTSSPAANA) is a signal peptide. Residues Tyr41, Cys62, Cys65, and His66 each coordinate heme. The chain crosses the membrane as a helical span at residues 291–311 (VKWLMAFFALVMLAQIMLVLK).

It belongs to the cytochrome f family. In terms of assembly, the 4 large subunits of the cytochrome b6-f complex are cytochrome b6, subunit IV (17 kDa polypeptide, PetD), cytochrome f and the Rieske protein, while the 4 small subunits are PetG, PetL, PetM and PetN. The complex functions as a dimer. Heme is required as a cofactor.

It localises to the cellular thylakoid membrane. Its function is as follows. Component of the cytochrome b6-f complex, which mediates electron transfer between photosystem II (PSII) and photosystem I (PSI), cyclic electron flow around PSI, and state transitions. This chain is Cytochrome f, found in Trichodesmium erythraeum (strain IMS101).